Consider the following 82-residue polypeptide: Small ribosomal subunit protein uS17 (82 aa).

Belongs to the universal ribosomal protein uS17 family. As to quaternary structure, part of the 30S ribosomal subunit.

Functionally, one of the primary rRNA binding proteins, it binds specifically to the 5'-end of 16S ribosomal RNA. The polypeptide is Small ribosomal subunit protein uS17 (Nitrobacter winogradskyi (strain ATCC 25391 / DSM 10237 / CIP 104748 / NCIMB 11846 / Nb-255)).